The following is a 261-amino-acid chain: Undecaprenyl-diphosphatase (261 aa).

6 helical membrane-spanning segments follow: residues 39 to 59 (NVLLFDILVHLGTLVPLLIIF), 76 to 96 (LLIIAGTVPTALIGLGFKDFF), 99 to 119 (LFVSGSTLGIEFIITGLILWL), 173 to 193 (AAKFSFLLSIPAILGAAVLDL), 206 to 226 (IDLMPFIVGFFAAMLSGYFAV), and 238 to 258 (LTWFSYYVWILGVTILVLQAA).

This sequence belongs to the UppP family.

The protein localises to the cell membrane. It catalyses the reaction di-trans,octa-cis-undecaprenyl diphosphate + H2O = di-trans,octa-cis-undecaprenyl phosphate + phosphate + H(+). In terms of biological role, catalyzes the dephosphorylation of undecaprenyl diphosphate (UPP). Confers resistance to bacitracin. This Carboxydothermus hydrogenoformans (strain ATCC BAA-161 / DSM 6008 / Z-2901) protein is Undecaprenyl-diphosphatase.